The following is a 117-amino-acid chain: Appetite-regulating hormone (117 aa).

The first 23 residues, 1–23 (MVSSATICSLLLLSMLWMDMAMA), serve as a signal peptide directing secretion. Residue S26 is the site of O-decanoyl serine; alternate attachment. A lipid anchor (O-hexanoyl serine; alternate) is attached at S26. S26 carries O-octanoyl serine; alternate lipidation. A disordered region spans residues 28–68 (LSPEHQKAQQRKESKKPPAKLQPRALEGWLHPEDRGQAEEA). Residues 31–43 (EHQKAQQRKESKK) show a composition bias toward basic and acidic residues. A propeptide spans 52-75 (ALEGWLHPEDRGQAEEAEEELEIR) (removed in mature form). L98 is modified (leucine amide). A propeptide spans 99-117 (GKFLQDILWEEVKEAPANK) (removed in mature form).

It belongs to the motilin family. In terms of processing, O-octanoylated by GOAT/MBOAT4. O-octanoylation is essential for ghrelin activity. The replacement of Ser-26 by aromatic tryptophan preserves ghrelin activity. Amidation of Leu-98 is essential for obestatin activity. Ghrelin is broadly expressed with higher expression in the stomach. Very low levels are detected in the hypothalamus, heart, lung, pancreas, intestine and adipose tissue. Obestatin is most highly expressed in jejunum, and also found in duodenum, stomach, pituitary, ileum, liver, hypothalamus and heart. Expressed in low levels in pancreas, cerebellum, cerebrum, kidney, testis, ovary colon and lung.

The protein localises to the secreted. In terms of biological role, ghrelin is the ligand for growth hormone secretagogue receptor type 1 (GHSR). Induces the release of growth hormone from the pituitary. Has an appetite-stimulating effect, induces adiposity and stimulates gastric acid secretion. Involved in growth regulation. Its function is as follows. Obestatin may be the ligand for GPR39. May have an appetite-reducing effect resulting in decreased food intake. May reduce gastric emptying activity and jejunal motility. The sequence is that of Appetite-regulating hormone (Ghrl) from Rattus norvegicus (Rat).